The following is a 332-amino-acid chain: Nucleotide-binding protein RC1_2868 (332 aa).

The disordered stretch occupies residues 1-27 (MTGQPLTMETAAGADAGTGAATHPADG). Residues 10-22 (TAAGADAGTGAAT) are compositionally biased toward low complexity. ATP is bound at residue 36–43 (GMSGGGLS). Residue 82–85 (DSRT) participates in GTP binding. Composition is skewed to basic and acidic residues over residues 302–312 (GHRDLDRRHPA) and 322–332 (VASRETPEEHR). The segment at 302-332 (GHRDLDRRHPAPEPAPPWREVASRETPEEHR) is disordered.

The protein belongs to the RapZ-like family.

Its function is as follows. Displays ATPase and GTPase activities. The protein is Nucleotide-binding protein RC1_2868 of Rhodospirillum centenum (strain ATCC 51521 / SW).